We begin with the raw amino-acid sequence, 73 residues long: Salivary thrombin inhibitor XC-42 (73 aa).

Positions 1–23 are cleaved as a signal peptide; sequence MKLQFLFIFIAFCVMLFAQIATA.

Interacts with human F2 (thrombin). As to expression, salivary gland (at protein level).

It is found in the secreted. Functionally, acts as a competitive inhibitor of host thrombin. The protein is Salivary thrombin inhibitor XC-42 of Xenopsylla cheopis (Oriental rat flea).